A 185-amino-acid polypeptide reads, in one-letter code: Hypoxanthine/guanine phosphoribosyltransferase (185 aa).

It belongs to the purine/pyrimidine phosphoribosyltransferase family. Archaeal HPRT subfamily. As to quaternary structure, homodimer.

It localises to the cytoplasm. The catalysed reaction is IMP + diphosphate = hypoxanthine + 5-phospho-alpha-D-ribose 1-diphosphate. It carries out the reaction GMP + diphosphate = guanine + 5-phospho-alpha-D-ribose 1-diphosphate. It functions in the pathway purine metabolism; IMP biosynthesis via salvage pathway; IMP from hypoxanthine: step 1/1. In terms of biological role, catalyzes a salvage reaction resulting in the formation of IMP that is energically less costly than de novo synthesis. The sequence is that of Hypoxanthine/guanine phosphoribosyltransferase from Aciduliprofundum boonei (strain DSM 19572 / T469).